Reading from the N-terminus, the 164-residue chain is Pleckstrin homology domain-containing family J member 1 (164 aa).

Positions 15-108 (PAEMAAELGM…WMEALQRASY (94 aa)) constitute a PH domain.

The sequence is that of Pleckstrin homology domain-containing family J member 1 (Plekhj1) from Mus musculus (Mouse).